We begin with the raw amino-acid sequence, 1746 residues long: Tenascin (1746 aa).

A signal peptide spans 1–22 (MGVVTRLLVGTFLASLALPAQG). Residues 23–185 (GVLKKVIRHK…CEPGWKGPNC (163 aa)) form an involved in hexamer formation region. A glycan (N-linked (GlcNAc...) asparagine) is linked at N38. S65, S70, and S72 each carry phosphoserine. S72 carries O-linked (Xyl...) (chondroitin sulfate) serine glycosylation. Residues 118–145 (DVKELLSRLEELENLVSSLREQCTSGAG) adopt a coiled-coil conformation. 2 N-linked (GlcNAc...) asparagine glycosylation sites follow: N166 and N184. One can recognise an EGF-like 1; incomplete domain in the interval 174–186 (CVCEPGWKGPNCS). EGF-like domains lie at 187–217 (EPEC…EDCS), 218–249 (QLAC…DCSR), 250–280 (ETCP…EDCN), 281–311 (EPLC…EDCG), 312–342 (ELIC…EDCG), 343–373 (RLAC…ADCS), 374–404 (ERRC…EDCG), 405–435 (ELRC…EDCS), 436–466 (QLRC…YDCS), 467–497 (EMSC…EDCR), 498–528 (ELRC…PDCA), 529–559 (DLAC…KDCG), 560–589 (QRRC…GLDC), and 590–620 (GQRS…GEDC). 42 disulfide bridges follow: C190–C200, C194–C205, C207–C216, C221–C231, C225–C236, C238–C247, C252–C263, C256–C268, C270–C279, C284–C294, C288–C299, C301–C310, C315–C325, C319–C330, C332–C341, C346–C356, C350–C361, C363–C372, C377–C387, C381–C392, C394–C403, C408–C418, C412–C423, C425–C434, C439–C449, C443–C454, C456–C465, C470–C480, C474–C485, C487–C496, C501–C511, C505–C516, C518–C527, C532–C542, C536–C547, C549–C558, C563–C573, C567–C578, C580–C589, C594–C604, C598–C609, and C611–C620. N-linked (GlcNAc...) asparagine glycosylation is present at N327. Fibronectin type-III domains follow at residues 625–717 (PPKD…TPEG), 718–801 (LKFK…VTTT), 805–894 (APSQ…TGLD), 895–988 (APRN…LDPP), 989–1075 (KDFR…AGEP), 1076–1166 (EIGN…EAEP), 1167–1256 (EVDN…TAMG), 1257–1346 (SPKE…ALDG), 1347–1433 (PSGL…TDLD), and 1434–1522 (SPRD…IGLL). N-linked (GlcNAc...) asparagine glycosylation occurs at N788. T905 carries the post-translational modification Phosphothreonine. N-linked (GlcNAc...) asparagine glycans are attached at residues N1034, N1079, and N1121. A glycan (N-linked (GlcNAc...) asparagine) is linked at N1354. The 216-residue stretch at 1520-1735 (GLLYPFPRDC…FAEMKLRPSN (216 aa)) folds into the Fibrinogen C-terminal domain.

It belongs to the tenascin family. In terms of assembly, homohexamer; disulfide-linked. A homotrimer may be formed in the triple coiled-coil region and may be stabilized by disulfide rings at both ends. Two of such half-hexabrachions may be disulfide linked within the central globule. Interacts with CSPG4. Interacts (via the 3rd fibronectin type-III domain) with integrin ITGA9:ITGB1. As to expression, submaxillary glands and brain.

The protein localises to the secreted. It localises to the extracellular space. Its subcellular location is the extracellular matrix. In terms of biological role, extracellular matrix protein implicated in guidance of migrating neurons as well as axons during development, synaptic plasticity as well as neuronal regeneration. Promotes neurite outgrowth from cortical neurons grown on a monolayer of astrocytes. Ligand for integrins alpha-8/beta-1, alpha-9/beta-1, alpha-V/beta-3 and alpha-V/beta-6. In tumors, stimulates angiogenesis by elongation, migration and sprouting of endothelial cells. The protein is Tenascin (TNC) of Sus scrofa (Pig).